A 108-amino-acid polypeptide reads, in one-letter code: UPF0060 membrane protein CJA_3703 (108 aa).

Helical transmembrane passes span 6–26 (LLFV…YLWL), 31–51 (SIWL…LLTL), 61–81 (AAYG…VDGV), and 85–105 (AYDW…AMGW).

The protein belongs to the UPF0060 family.

The protein resides in the cell inner membrane. This is UPF0060 membrane protein CJA_3703 from Cellvibrio japonicus (strain Ueda107) (Pseudomonas fluorescens subsp. cellulosa).